Reading from the N-terminus, the 857-residue chain is MVRTRPVPCVPSPDVNTATRRNPGRPKKQSIGADLSTTISKPGRPKKLSIGADLTTIRKPGRPKKLGADLTTIIRKPGRPTKLSNKQSLTALNEPECRIRKCVVKIRRIKVKNGVVSEISRNDAPDVDASTFEPARNSTMYIPSKVQKSTQPQNIKENVAGPETSPCQQRIRSKSPSGPAAEISPKKPPRFFHRDQPLTRTRSSVTRNVFDFLSQSQIEDDSDREDPAADIIQRLVKDGKACVMVRSRKIGKPRAKRTAKKVRPVGNRRKVSTKDNEPEPVKVVPKSIEPRLQKPSRSLSTIFEPEEDYSNDSEHGYVQPIEVPVQVHVEPSTSKQAHEGAYSNLARSVMLNQTQAQNPLPSTDRRRELINMARQLVSTPLNRRAPPVTDVSATTTALSPIAHQSPNAVRTAGGKSPWRVSDDSPLPNTFMFGFNNSQMPSYSSDHVQRRHVYVPDSPVEHAENIPHEESICPPLHEQNHDSNANDSNEENRPPPTISKSMSINDQESEENAENFVHLPNPRRTLQKRTPFKDINILEVVTLPSWKKNVTATVSKEITPTRVAPRPMATSSPAQRSQTRSNLFGFDDDFACEDIPRKSTTPSKGIAPTSMSLNREVTPALANRNQTEVNTFGCNEILPCENIPKEKETNTEERTSSSQNLFGFDEFITESQDSPANFTGLSQNVNLHDKLHRLAELRPRDGELPQVSYTSIRSDCLGESHSKQTDIRYMLCSTMIAPPRPAKRKPAAPTARESMGLFRVDQDEPEQSFADKQPRRTYVKERPQRKRKKRVQILYIESESEDEDEQDSHDKSLDSPEKKRHHVKRPRRDIEHEAKLEQFVTSFNKQCEEVEKFPVIIE.

Disordered regions lie at residues 1–50 (MVRT…KLSI) and 146–194 (VQKS…FFHR). Composition is skewed to polar residues over residues 146–156 (VQKSTQPQNIK) and 165–176 (SPCQQRIRSKSP). Ser173, Ser175, Ser184, and Ser222 each carry phosphoserine. Positions 251–271 (GKPRAKRTAKKVRPVGNRRKV) are enriched in basic residues. Positions 251–281 (GKPRAKRTAKKVRPVGNRRKVSTKDNEPEPV) are disordered. Position 405 is a phosphoserine (Ser405). Disordered stretches follow at residues 470–514 (SICP…NAEN) and 737–830 (PPRP…RDIE). Residues 771–781 (KQPRRTYVKER) show a composition bias toward basic and acidic residues. Acidic residues predominate over residues 797-806 (SESEDEDEQD). Over residues 807 to 816 (SHDKSLDSPE) the composition is skewed to basic and acidic residues. Positions 817–826 (KKRHHVKRPR) are enriched in basic residues.

Its subcellular location is the nucleus. The protein resides in the chromosome. Its function is as follows. Regulator of sister chromatid cohesion in mitosis. Probably involved in development of the central nervous system. This is Protein dalmatian (dmt) from Drosophila melanogaster (Fruit fly).